Consider the following 204-residue polypeptide: Probable calcium-binding protein CML46 (204 aa).

EF-hand domains lie at 72–106 (LEFQTSIKHEEYRDDDDDGLCREDVGMVMKSLGLS), 132–167 (PSLEEVKQAFDVFDENRDGFIDPIDLQRVLTILGLK), and 170–204 (SNLENCRRMIRSFDGSKDGRIDFYGFVKFMENNFC). The Ca(2+) site is built by Asp145, Asn147, Asp149, and Asp156.

In terms of biological role, potential calcium sensor. The polypeptide is Probable calcium-binding protein CML46 (Arabidopsis thaliana (Mouse-ear cress)).